Here is a 649-residue protein sequence, read N- to C-terminus: WEB family protein At5g55860 (649 aa).

Coiled-coil stretches lie at residues 59 to 227, 267 to 356, and 391 to 461; these read EKVL…ACSQ, EFAK…IESV, and TINQ…MSEK. Basic and acidic residues predominate over residues 443 to 453; it reads EAKAAETKALE. A disordered region spans residues 443 to 483; it reads EAKAAETKALEQIKSMSEKTNAARNSTSSESGSQSITLSQE. A compositionally biased stretch (polar residues) spans 456–467; the sequence is KSMSEKTNAARN. Over residues 468–482 the composition is skewed to low complexity; that stretch reads STSSESGSQSITLSQ. Positions 505-549 form a coiled coil; sequence AALAQVEAVRASENETLKKLETTQEEIKKLKTATEEALKKAAMAD. The tract at residues 583 to 611 is disordered; sequence MKMASESSPQQHYKAPKQKPVNNKLEKTK.

The protein belongs to the WEB family.

In Arabidopsis thaliana (Mouse-ear cress), this protein is WEB family protein At5g55860.